A 612-amino-acid chain; its full sequence is 2-isopropylmalate synthase B (612 aa).

Positions 71–344 constitute a Pyruvate carboxyltransferase domain; sequence VRIFDTTLRD…YTGINTQHIL (274 aa). A divalent metal cation-binding residues include D80, H277, and N313.

This sequence belongs to the alpha-IPM synthase/homocitrate synthase family. LeuA type 1 subfamily. As to quaternary structure, homodimer. The cofactor is a divalent metal cation.

The enzyme catalyses 3-methyl-2-oxobutanoate + acetyl-CoA + H2O = (2S)-2-isopropylmalate + CoA + H(+). The protein operates within amino-acid biosynthesis; L-leucine biosynthesis; L-leucine from 3-methyl-2-oxobutanoate: step 1/4. Functionally, catalyzes the condensation of the acetyl group of acetyl-CoA with 3-methyl-2-oxobutanoate (2-oxoisovalerate) to form 3-carboxy-3-hydroxy-4-methylpentanoate (2-isopropylmalate). The protein is 2-isopropylmalate synthase B (IPMSB) of Solanum pennellii (Tomato).